The sequence spans 225 residues: Small ribosomal subunit protein uS5 (225 aa).

Residues 57 to 120 (LEEQVLDVKL…AHAKLSLIKV (64 aa)) form the S5 DRBM domain.

Belongs to the universal ribosomal protein uS5 family. Part of the 30S ribosomal subunit. Contacts protein S4.

Its function is as follows. With S4 and S12 plays an important role in translational accuracy. This chain is Small ribosomal subunit protein uS5, found in Methanococcus maripaludis (strain DSM 14266 / JCM 13030 / NBRC 101832 / S2 / LL).